The chain runs to 200 residues: Holliday junction branch migration complex subunit RuvA (200 aa).

The interval 1-65 (MYEYIKGTLT…ETEHVLYGFS (65 aa)) is domain I. Positions 66 to 144 (SRAEKECFRL…TLMPLYLEEP (79 aa)) are domain II. The tract at residues 145-149 (VVPSS) is flexible linker. The domain III stretch occupies residues 150 to 200 (TANSSFKEGIGALMNLGFSRLAADRMMTEAVKELSEEASVAELLPIALRKS).

It belongs to the RuvA family. In terms of assembly, homotetramer. Forms an RuvA(8)-RuvB(12)-Holliday junction (HJ) complex. HJ DNA is sandwiched between 2 RuvA tetramers; dsDNA enters through RuvA and exits via RuvB. An RuvB hexamer assembles on each DNA strand where it exits the tetramer. Each RuvB hexamer is contacted by two RuvA subunits (via domain III) on 2 adjacent RuvB subunits; this complex drives branch migration. In the full resolvosome a probable DNA-RuvA(4)-RuvB(12)-RuvC(2) complex forms which resolves the HJ.

The protein resides in the cytoplasm. The RuvA-RuvB-RuvC complex processes Holliday junction (HJ) DNA during genetic recombination and DNA repair, while the RuvA-RuvB complex plays an important role in the rescue of blocked DNA replication forks via replication fork reversal (RFR). RuvA specifically binds to HJ cruciform DNA, conferring on it an open structure. The RuvB hexamer acts as an ATP-dependent pump, pulling dsDNA into and through the RuvAB complex. HJ branch migration allows RuvC to scan DNA until it finds its consensus sequence, where it cleaves and resolves the cruciform DNA. The sequence is that of Holliday junction branch migration complex subunit RuvA from Chlamydia trachomatis serovar A (strain ATCC VR-571B / DSM 19440 / HAR-13).